A 581-amino-acid chain; its full sequence is Probable CDP-diacylglycerol--glycerol-3-phosphate 3-phosphatidyltransferase (581 aa).

A disordered region spans residues 27–65 (RSATTTTTTTTKACGNGSSQSPPSTPLLSSKSSTITSNK). Low complexity predominate over residues 44–65 (SSQSPPSTPLLSSKSSTITSNK). Position 160-167 (160-167 (ASLYLGTS)) interacts with ATP. 2 consecutive PLD phosphodiesterase domains span residues 248–274 (TIGV…SKDY) and 487–520 (DKWT…GSRS). Catalysis depends on residues His253, Lys255, and Asp260.

The protein belongs to the CDP-alcohol phosphatidyltransferase class-II family.

The catalysed reaction is a CDP-1,2-diacyl-sn-glycerol + sn-glycerol 3-phosphate = a 1,2-diacyl-sn-glycero-3-phospho-(1'-sn-glycero-3'-phosphate) + CMP + H(+). The protein operates within phospholipid metabolism; phosphatidylglycerol biosynthesis; phosphatidylglycerol from CDP-diacylglycerol: step 1/2. Functions in the biosynthesis of the anionic phospholipids phosphatidylglycerol and cardiolipin. In Dictyostelium discoideum (Social amoeba), this protein is Probable CDP-diacylglycerol--glycerol-3-phosphate 3-phosphatidyltransferase (pgs1).